The following is a 159-amino-acid chain: Large ribosomal subunit protein uL10 (159 aa).

Belongs to the universal ribosomal protein uL10 family. Part of the ribosomal stalk of the 50S ribosomal subunit. The N-terminus interacts with L11 and the large rRNA to form the base of the stalk. The C-terminus forms an elongated spine to which L12 dimers bind in a sequential fashion forming a multimeric L10(L12)X complex.

Its function is as follows. Forms part of the ribosomal stalk, playing a central role in the interaction of the ribosome with GTP-bound translation factors. The protein is Large ribosomal subunit protein uL10 of Campylobacter lari (strain RM2100 / D67 / ATCC BAA-1060).